The primary structure comprises 101 residues: 2-amino-4-ketopentanoate thiolase alpha subunit (101 aa).

Belongs to the OrtA family. In terms of assembly, heterodimer with OrtB.

It catalyses the reaction D-alanine + acetyl-CoA = (2R)-2-amino-4-oxopentanoate + CoA. Its activity is regulated as follows. Completely inhibited by p-chloromercuribenzoate (p-ClHgBzO) and acetyl-CoA, and partially inhibited by N-ethylmaleimide. Its function is as follows. Involved in the ornithine fermentation pathway. Catalyzes the thiolytic cleavage of 2-amino-4-ketopentanoate (AKP) with coenzyme A (CoA) to form acetyl-CoA and alanine. It is strictly specific for AKP. The polypeptide is 2-amino-4-ketopentanoate thiolase alpha subunit (Acetoanaerobium sticklandii (strain ATCC 12662 / DSM 519 / JCM 1433 / CCUG 9281 / NCIMB 10654 / HF) (Clostridium sticklandii)).